A 130-amino-acid chain; its full sequence is L-ectoine synthase (130 aa).

The protein belongs to the ectoine synthase family.

It carries out the reaction (2S)-4-acetamido-2-aminobutanoate = L-ectoine + H2O. It participates in amine and polyamine biosynthesis; ectoine biosynthesis; L-ectoine from L-aspartate 4-semialdehyde: step 3/3. In terms of biological role, catalyzes the circularization of gamma-N-acetyl-alpha,gamma-diaminobutyric acid (ADABA) to ectoine (1,4,5,6-tetrahydro-2-methyl-4-pyrimidine carboxylic acid), which is an excellent osmoprotectant. This chain is L-ectoine synthase, found in Desulfatibacillum aliphaticivorans.